The primary structure comprises 346 residues: L-glyceraldehyde 3-phosphate reductase (346 aa).

The NADP(+) site is built by Trp-33, Asp-61, Tyr-66, Ser-168, Gln-193, Thr-223, Leu-225, Gln-227, Lys-233, Ser-303, Gln-307, and Asn-311.

This sequence belongs to the shaker potassium channel beta subunit family. In terms of assembly, homotetramer. Homooctamer.

The catalysed reaction is a primary alcohol + NADP(+) = an aldehyde + NADPH + H(+). It catalyses the reaction hydroxyacetone + NADP(+) = methylglyoxal + NADPH + H(+). Functionally, aldo-keto reductase that catalyzes the stereospecific, NADPH-dependent reduction of L-glyceraldehyde 3-phosphate (L-GAP) to L-glycerol 3-phosphate (L-G3P). The physiological role of Gpr is the detoxification of L-GAP, which may be formed via non-enzymatic and/or enzymatic racemization of D-GAP. Also contributes to cellular methylglyoxal detoxification by catalyzing the NADPH-dependent conversion of methylglyoxal to acetol. However, the catalytic efficiency of methylglyoxal reductase activity is more than 2 orders of magnitude lower than the L-GAP reductase activity. In addition, exhibits activity with glyoxal and probably plays a significant role in detoxification of glyoxal in vivo. Shows broad specificity and can use aromatic aldehydes such as 4-nitrobenzaldehyde and benzaldehyde, D,L-glyceraldehyde, phenylglyoxal, isatin and the model substrate 4-nitrobenzaldehyde. The chain is L-glyceraldehyde 3-phosphate reductase from Escherichia coli (strain K12).